We begin with the raw amino-acid sequence, 681 residues long: Sorting nexin-41 (681 aa).

Residues 1–12 show a composition bias toward acidic residues; the sequence is MSTDNLFEDIEQ. Positions 1-94 are disordered; the sequence is MSTDNLFEDI…HNTSLNNGYP (94 aa). Positions 13-24 are enriched in polar residues; sequence DNNPSFYGNPSI. The PX domain maps to 113-236; it reads NDSQLQVDII…KFFDPNYELC (124 aa). 4 residues coordinate a 1,2-diacyl-sn-glycero-3-phospho-(1D-myo-inositol-3-phosphate): R151, S153, K177, and R200. 2 disordered regions span residues 475–505 and 558–597; these read LASR…TENF and TATG…QTSI. 2 stretches are compositionally biased toward low complexity: residues 482 to 497 and 558 to 589; these read DNDS…NNND and TATG…QSQS.

Belongs to the sorting nexin family.

The protein localises to the endosome membrane. It localises to the endomembrane system. Functionally, may be required for cytoplasm to vacuole transport (Cvt) and pexophagy. This is Sorting nexin-41 (SNX41) from Candida albicans (strain SC5314 / ATCC MYA-2876) (Yeast).